Here is a 326-residue protein sequence, read N- to C-terminus: DNA repair protein RAD51 homolog 4 (326 aa).

The interval 1 to 83 (MGVLRAGLCP…ELKTSTAILS (83 aa)) is preferentially binds ssDNA. 107–114 (GAPGSGKT) contributes to the ATP binding site.

Belongs to the RecA family. RAD51 subfamily. In terms of assembly, part of the BCDX2 complex consisting of RAD51B, RAD51C, RAD51D and XRCC2; the complex has a ring-like structure arranged into a flat disc around a central channel. In the absence of DNA, the BCDX2 subcomplex XRCC2:RAD51D formed a multimeric ring structure; in the presence of single-stranded DNA it formed a filamentous structure with the ssDNA. Interacts with SWSAP1 and ZSWIM7; involved in homologous recombination repair. Interacts with BLM; required for stimulation of BLM activity by the BCDX2 subcomplex XRCC2:RAD51D.

It is found in the nucleus. Involved in the homologous recombination repair (HRR) pathway of double-stranded DNA breaks arising during DNA replication or induced by DNA-damaging agents. Bind to single-stranded DNA (ssDNA) and has DNA-dependent ATPase activity. Part of the RAD51 paralog protein complex BCDX2 which acts in the BRCA1-BRCA2-dependent HR pathway. Upon DNA damage, BCDX2 acts downstream of BRCA2 recruitment and upstream of RAD51 recruitment. BCDX2 binds predominantly to the intersection of the four duplex arms of the Holliday junction and to junction of replication forks. The BCDX2 complex was originally reported to bind single-stranded DNA, single-stranded gaps in duplex DNA and specifically to nicks in duplex DNA. Involved in telomere maintenance. The BCDX2 subcomplex XRCC2:RAD51D can stimulate Holliday junction resolution by BLM. This Bos taurus (Bovine) protein is DNA repair protein RAD51 homolog 4 (RAD51D).